Reading from the N-terminus, the 231-residue chain is Cutinase 2 (231 aa).

Residues Met1–Ala16 form the signal peptide. Cys48 and Cys126 are oxidised to a cystine. The active-site Nucleophile is Ser137. A disulfide bridge links Cys188 with Cys195. The active site involves Asp192. His205 acts as the Proton donor/acceptor in catalysis.

This sequence belongs to the cutinase family. The 2 disulfide bonds play a critical role in holding the catalytic residues in juxta-position; reduction of the disulfide bridges results in the complete inactivation of the enzyme.

Its subcellular location is the secreted. The catalysed reaction is cutin + H2O = cutin monomers.. Functionally, catalyzes the hydrolysis of complex carboxylic polyesters found in the cell wall of plants. Degrades cutin, a macromolecule that forms the structure of the plant cuticle. Allows pathogenic fungi to penetrate through the cuticular barrier into the host plant during the initial stage of fungal infection. This is Cutinase 2 (CUT2) from Fusarium vanettenii (Neocosmospora pisi).